Consider the following 489-residue polypeptide: Palmitoyltransferase ZDHHC14 (489 aa).

Residues 1-60 are Cytoplasmic-facing; it reads MPPGGGGPMKDCEYSQISTHSSSPMESPHKKKKIAARRKWEVFPGRNKFFCNGRIMMARQ. A helical transmembrane segment spans residues 61-81; the sequence is TGVFYLTLILILVTSGLFFAF. At 82 to 89 the chain is on the lumenal side; the sequence is DCRYLAEK. Residues 90–110 form a helical membrane-spanning segment; it reads ITPAIPVVGGILFFFVMGTLL. Residues 111–208 lie on the Cytoplasmic side of the membrane; it reads RTSFSDPGVL…GNCVGKRNYR (98 aa). The DHHC domain occupies 165-215; that stretch reads KYCFTCKIFRPPRASHCSLCDNCVEQFDHHCPWVGNCVGKRNYRFFYMFIL. The active-site S-palmitoyl cysteine intermediate is cysteine 195. The helical transmembrane segment at 209–229 threads the bilayer; that stretch reads FFYMFILSLSFLTVFIFAFVI. Over 230–255 the chain is Lumenal; the sequence is THVIHRSQQKGFLDALKDSPASVLEA. The helical transmembrane segment at 256–276 threads the bilayer; the sequence is VICFFSVWSIIGLSGFHTYLI. Topologically, residues 277 to 489 are cytoplasmic; sequence SSNQTTNEDI…VRGLVKLSSV (213 aa). The segment at 434 to 454 is disordered; it reads HGGHQFLTPDEAPSPPRMLGA. Serine 456 is subject to Phosphoserine.

Belongs to the DHHC palmitoyltransferase family. ERF2/ZDHHC9 subfamily.

It is found in the endoplasmic reticulum membrane. The protein resides in the golgi apparatus membrane. The catalysed reaction is L-cysteinyl-[protein] + hexadecanoyl-CoA = S-hexadecanoyl-L-cysteinyl-[protein] + CoA. Palmitoyltransferase that could catalyze the addition of palmitate onto various protein substrates. May have a palmitoyltransferase activity toward the beta-2 adrenergic receptor/ADRB2 and thereby regulate G protein-coupled receptor signaling. May play a role in cell differentiation and apoptosis. This Mus musculus (Mouse) protein is Palmitoyltransferase ZDHHC14.